The sequence spans 689 residues: FAST kinase domain-containing protein 2, mitochondrial (689 aa).

A phosphoserine mark is found at Ser113 and Ser126. The region spanning 617-674 is the RAP domain; the sequence is VAVLCVPKSVYCLNSCHPRGLMAMKIRHLNVMGFHVILIHNWELKKLKMEDAVTFVRK.

The protein belongs to the FAST kinase family. As to quaternary structure, monomer. Found in a complex with GRSF1, DDX28, DHX30 and FASTKD5. Associates with the 16S mitochondrial rRNA (16S mt-rRNA). Forms a regulatory protein-RNA complex, consisting of RCC1L, NGRN, RPUSD3, RPUSD4, TRUB2, FASTKD2 and 16S mt-rRNA. In terms of tissue distribution, ubiquitously expressed. Expression detected in spleen, testis, colon, heart, smooth muscle, kidney, brain, lung, liver, brown and white adipose tissue with highest expression in testis, heart and smooth muscle.

The protein resides in the mitochondrion matrix. It localises to the mitochondrion nucleoid. Plays an important role in assembly of the mitochondrial large ribosomal subunit. As a component of a functional protein-RNA module, consisting of RCC1L, NGRN, RPUSD3, RPUSD4, TRUB2, FASTKD2 and 16S mitochondrial ribosomal RNA (16S mt-rRNA), controls 16S mt-rRNA abundance and is required for intra-mitochondrial translation. May play a role in mitochondrial apoptosis. The sequence is that of FAST kinase domain-containing protein 2, mitochondrial (Fastkd2) from Mus musculus (Mouse).